The chain runs to 107 residues: Lipid-anchored protein YDL012C (107 aa).

The segment covering 1–18 has biased composition (polar residues); sequence MSAQDYYGNSASKQSYSR. Residues 1–86 are disordered; sequence MSAQDYYGNS…VQQQPASSGN (86 aa). Ser-2 is subject to N-acetylserine. A Glycyl lysine isopeptide (Lys-Gly) (interchain with G-Cter in ubiquitin) cross-link involves residue Lys-13. The span at 35 to 81 shows a compositional bias: low complexity; sequence PSQSQQNYYPPQQQQQQYQQQPQYYQQQQPQYYQQHPQQPIYVQQQP.

This sequence belongs to the CYSTM1 family.

The protein localises to the cell membrane. The protein is Lipid-anchored protein YDL012C of Saccharomyces cerevisiae (strain ATCC 204508 / S288c) (Baker's yeast).